We begin with the raw amino-acid sequence, 358 residues long: Probable tartrate dehydrogenase/decarboxylase TtuC' (358 aa).

Residues D222, D246, and D250 each contribute to the Mn(2+) site.

This sequence belongs to the isocitrate and isopropylmalate dehydrogenases family. Mg(2+) is required as a cofactor. Requires Mn(2+) as cofactor. It depends on K(+) as a cofactor.

The protein resides in the cytoplasm. It carries out the reaction tartrate + NAD(+) = 2-hydroxy-3-oxosuccinate + NADH + H(+). The catalysed reaction is (2R,3S)-tartrate + NAD(+) = 2-hydroxy-3-oxosuccinate + NADH + H(+). The enzyme catalyses (2R,3R)-tartrate + NAD(+) = 2-hydroxy-3-oxosuccinate + NADH + H(+). It catalyses the reaction (2R,3R)-tartrate + H(+) = (R)-glycerate + CO2. It carries out the reaction (R)-malate + NAD(+) = pyruvate + CO2 + NADH. It participates in carbohydrate acid metabolism; tartrate degradation; 2-hydroxy-3-oxosuccinate from L-tartrate: step 1/1. It functions in the pathway carbohydrate acid metabolism; tartrate degradation; 2-hydroxy-3-oxosuccinate from meso-tartrate: step 1/1. Its pathway is carbohydrate acid metabolism; tartrate degradation; D-glycerate from L-tartrate: step 1/1. Functionally, has multiple catalytic activities. Apart from catalyzing the oxidation of (+)-tartrate to oxaloglycolate, also converts meso-tartrate to D-glycerate and catalyzes the oxidative decarboxylation of D-malate to pyruvate. The chain is Probable tartrate dehydrogenase/decarboxylase TtuC' (ttuC') from Agrobacterium vitis (Rhizobium vitis).